The following is a 171-amino-acid chain: Protein phosphatase 1 regulatory subunit 1A (171 aa).

N-acetylmethionine is present on M1. The tract at residues 1–171 (MEQDNSPRKI…PLDSKGANSV (171 aa)) is disordered. Residues 9-12 (KIQF) are essential for activity. Over residues 19-29 (PHLDPEAAEQI) the composition is skewed to basic and acidic residues. The residue at position 35 (T35) is a Phosphothreonine; by PKA. An essential for activity region spans residues 42–54 (TSDQSSPEIDEDR). 4 positions are modified to phosphoserine: S43, S46, S47, and S67. The segment covering 135–157 (KTAECIPKTHERGSKEPSTKEPS) has biased composition (basic and acidic residues). Residues 143–171 (THERGSKEPSTKEPSTHIPPLDSKGANSV) are interaction with PPP1R15A.

The protein belongs to the protein phosphatase inhibitor 1 family. Interacts with PPP1R15A. Post-translationally, phosphorylation of Thr-35 is required for activity.

Functionally, inhibitor of protein-phosphatase 1. This protein may be important in hormonal control of glycogen metabolism. Hormones that elevate intracellular cAMP increase I-1 activity in many tissues. I-1 activation may impose cAMP control over proteins that are not directly phosphorylated by PKA. Following a rise in intracellular calcium, I-1 is inactivated by calcineurin (or PP2B). Does not inhibit type-2 phosphatases. The polypeptide is Protein phosphatase 1 regulatory subunit 1A (PPP1R1A) (Homo sapiens (Human)).